The sequence spans 89 residues: Small ribosomal subunit protein uS15 (89 aa).

The protein belongs to the universal ribosomal protein uS15 family. Part of the 30S ribosomal subunit. Forms a bridge to the 50S subunit in the 70S ribosome, contacting the 23S rRNA.

One of the primary rRNA binding proteins, it binds directly to 16S rRNA where it helps nucleate assembly of the platform of the 30S subunit by binding and bridging several RNA helices of the 16S rRNA. In terms of biological role, forms an intersubunit bridge (bridge B4) with the 23S rRNA of the 50S subunit in the ribosome. The chain is Small ribosomal subunit protein uS15 from Acholeplasma laidlawii (strain PG-8A).